A 367-amino-acid polypeptide reads, in one-letter code: MVTQILGAMESQVGGGPAGPALPNGPLLGTNGATDDSKTNLIVNYLPQNMTQDEFKSLFGSIGDIESCKLVRDKITGQSLGYGFVNYSDPNDADKAINTLNGLKLQTKTIKVSYARPSSASIRDANLYVSGLPKTMSQKEMEQLFSQYGRIITSRILLDQATGVSRGVGFIRFDKRIEAEEAIKGLNGQKPLGAAEPITVKFANNPSQKTGQALLTHLYQSSARRYAGPLHHQTQRFRLDNLLNMAYGVKSPLSLIARFSPIAIDGMSGLAGVGLSGGAAGAGWCIFVYNLSPEADESVLWQLFGPFGAVTNVKVIRDFTTNKCKGFGFVTMTNYDEAAMAIASLNGYRLGERVLQVSFKTSKQHKA.

RRM domains follow at residues 39 to 117, 125 to 205, and 284 to 362; these read TNLI…YARP, ANLY…FANN, and WCIF…FKTS.

This sequence belongs to the RRM elav family. Interacts with MAP1B light chain LC1. In terms of tissue distribution, brain specific. Expressed in the hippocampus with expression in CA1, CA3 and dentate gyrus.

Functionally, RNA-binding protein that binds to AU-rich element (ARE) sequences of target mRNAs, including VEGF mRNA. May also bind poly-A tracts via RRM 3. May be involved in neuronal differentiation and maintenance. Plays a role in the stabilization of GAP43 mRNA and in spatial learning. The sequence is that of ELAV-like protein 3 (Elavl3) from Mus musculus (Mouse).